The primary structure comprises 109 residues: A-type ATP synthase subunit F (109 aa).

The protein belongs to the V-ATPase F subunit family. In terms of assembly, has multiple subunits with at least A(3), B(3), C, D, E, F, H, I and proteolipid K(x).

The protein localises to the cell membrane. Its function is as follows. Component of the A-type ATP synthase that produces ATP from ADP in the presence of a proton gradient across the membrane. The sequence is that of A-type ATP synthase subunit F from Halorubrum lacusprofundi (strain ATCC 49239 / DSM 5036 / JCM 8891 / ACAM 34).